Consider the following 205-residue polypeptide: High frequency lysogenization protein HflD homolog (205 aa).

Belongs to the HflD family.

It localises to the cytoplasm. It is found in the cell inner membrane. The protein is High frequency lysogenization protein HflD homolog of Haemophilus influenzae (strain PittEE).